We begin with the raw amino-acid sequence, 362 residues long: Probable S-adenosylmethionine-dependent methyltransferase At5g37970 (362 aa).

S-adenosyl-L-homocysteine contacts are provided by Tyr-19, Cys-66, Asn-71, Asp-107, Ser-136, and Phe-137. The Mg(2+) site is built by Asn-175, Glu-261, and Phe-263.

It belongs to the methyltransferase superfamily. Type-7 methyltransferase family. In terms of assembly, homodimer. Mg(2+) is required as a cofactor.

This Arabidopsis thaliana (Mouse-ear cress) protein is Probable S-adenosylmethionine-dependent methyltransferase At5g37970.